The chain runs to 356 residues: DNA polymerase IV (356 aa).

The UmuC domain occupies 7–188 (IIHIDMDAFY…IPVTKFYGVG (182 aa)). Mg(2+) is bound by residues aspartate 11 and aspartate 106. Glutamate 107 is an active-site residue.

This sequence belongs to the DNA polymerase type-Y family. Monomer. The cofactor is Mg(2+).

It is found in the cytoplasm. The catalysed reaction is DNA(n) + a 2'-deoxyribonucleoside 5'-triphosphate = DNA(n+1) + diphosphate. Its function is as follows. Poorly processive, error-prone DNA polymerase involved in untargeted mutagenesis. Copies undamaged DNA at stalled replication forks, which arise in vivo from mismatched or misaligned primer ends. These misaligned primers can be extended by PolIV. Exhibits no 3'-5' exonuclease (proofreading) activity. May be involved in translesional synthesis, in conjunction with the beta clamp from PolIII. The chain is DNA polymerase IV from Listeria welshimeri serovar 6b (strain ATCC 35897 / DSM 20650 / CCUG 15529 / CIP 8149 / NCTC 11857 / SLCC 5334 / V8).